Reading from the N-terminus, the 158-residue chain is NADH-quinone oxidoreductase subunit B (158 aa).

[4Fe-4S] cluster is bound by residues Cys-37, Cys-38, Cys-102, and Cys-132.

Belongs to the complex I 20 kDa subunit family. As to quaternary structure, NDH-1 is composed of 14 different subunits. Subunits NuoB, C, D, E, F, and G constitute the peripheral sector of the complex. [4Fe-4S] cluster is required as a cofactor.

The protein resides in the cell inner membrane. The catalysed reaction is a quinone + NADH + 5 H(+)(in) = a quinol + NAD(+) + 4 H(+)(out). In terms of biological role, NDH-1 shuttles electrons from NADH, via FMN and iron-sulfur (Fe-S) centers, to quinones in the respiratory chain. Couples the redox reaction to proton translocation (for every two electrons transferred, four hydrogen ions are translocated across the cytoplasmic membrane), and thus conserves the redox energy in a proton gradient. The sequence is that of NADH-quinone oxidoreductase subunit B from Leptothrix cholodnii (strain ATCC 51168 / LMG 8142 / SP-6) (Leptothrix discophora (strain SP-6)).